We begin with the raw amino-acid sequence, 254 residues long: Trans-aconitate 2-methyltransferase (254 aa).

This sequence belongs to the methyltransferase superfamily. Tam family.

It localises to the cytoplasm. The catalysed reaction is trans-aconitate + S-adenosyl-L-methionine = (E)-3-(methoxycarbonyl)pent-2-enedioate + S-adenosyl-L-homocysteine. Its function is as follows. Catalyzes the S-adenosylmethionine monomethyl esterification of trans-aconitate. The polypeptide is Trans-aconitate 2-methyltransferase (Mycobacterium sp. (strain JLS)).